Here is a 107-residue protein sequence, read N- to C-terminus: Early E3A 12.5 kDa protein (107 aa).

This sequence belongs to the adenoviridae E3A-2 family.

Its function is as follows. Not yet known. This chain is Early E3A 12.5 kDa protein, found in Human adenovirus C serotype 5 (HAdV-5).